We begin with the raw amino-acid sequence, 870 residues long: Dynamin-2 (870 aa).

A Dynamin-type G domain is found at 28-294 (HLDLPQIAVV…LTNHIRESLP (267 aa)). The tract at residues 38–45 (GGQSAGKS) is G1 motif. Positions 41, 43, 44, 45, 46, 59, and 60 each coordinate GDP. A G2 motif region spans residues 64–66 (VTR). The G3 motif stretch occupies residues 136–139 (DLPG). The interval 205–208 (TKLD) is G4 motif. Lys-206, Asp-208, and Asp-211 together coordinate GDP. Tyr-231 is modified (phosphotyrosine). A G5 motif region spans residues 235 to 238 (VNRS). GDP is bound by residues Asn-236, Arg-237, and Gln-239. The residue at position 299 (Lys-299) is an N6-acetyllysine. The region spanning 519-625 (LVIRRGWLTI…WKASFLRAGV (107 aa)) is the PH domain. At Tyr-597 the chain carries Phosphotyrosine. An N6-acetyllysine modification is found at Lys-598. The 92-residue stretch at 653 to 744 (VETIRNLVDS…IIGDISTSTV (92 aa)) folds into the GED domain. The disordered stretch occupies residues 741–870 (TSTVSTPVPP…IRPAEPSLLD (130 aa)). Thr-755 is subject to Phosphothreonine. The span at 756-767 (WLQNTSGHSPTP) shows a compositional bias: polar residues. Ser-764 is modified (phosphoserine; by CDK1). Residues 826–846 (SAPPQIPSRPARIPPGIPPGV) show a composition bias toward pro residues. Residues 847–864 (PSRRAPAAPSRPTIIRPA) show a composition bias toward low complexity.

Belongs to the TRAFAC class dynamin-like GTPase superfamily. Dynamin/Fzo/YdjA family. Oligomerizes into a helical polymer that self-assembles around the vesicle membrane, when associated to the menbrane through lipid binding. Interacts with SHANK1 and SHANK2. Interacts with SNX9. Interacts (via C-terminal proline-rich domain (PRD)) with SNX18 (via SH3 domain); this interaction regulates ATG9A and ATG16L1 trafficking from recycling endosomes to sites of autophagosome formation. Interacts with SNX33 (via SH3 domain). Interacts with MYO1E (via SH3 domain). Interacts with PSTPIP1 (via SH3 domain). Interacts with CTNND2. Interacts (via C-terminal proline-rich domain (PRD)) with BIN1 (via SH3 domain); this interaction allows the recruitment of DNM2 to the membrane tubules and inhibits self-assembly-stimulated GTPase activity on the membrane. Interacts with GABARAP, GABARAPL1 and GABARAPL2. Interacts with MAP1LC3B (the lipidate and non-lipidated LC3 form); this interaction mediates recycling endosome scission leading to autophagosome release. Interacts with ITSN1. Interacts (via C-terminal proline-rich domain (PRD)) with SH3BP4 (via SH3 domain); this interaction controls the GTPase activity and is prevented by EGFR-induced tyrosine phosphorylation of either DNM2 or SH3BP4. Interacts with MYOF. May interact with PIK3C3. May be a component of a complex composed of RAB5A (in GDP-bound form), DYN2 and PIK3C3. Interacts with SDC4; this interaction is markedly enhanced at focal ahesion site upon induction of focal adhesions and stress-fiber formation. Interacts with ACTN1. Interacts with CTTN; this interaction stimulates the intrinsic GTPase activity of DNM2 and stabilizes the association of DNM2 and actin filaments; in addition this interaction is stimulated by ligand binding to the receptor, leading to the recruitment of the DNM2-CTTN complex to the sequestered receptor-ligand complex to its internalization. Interacts with NOSTRIN (via SH3 domain); this interaction allows the recruitment of NOS3 to dynamin-positive structures. Interacts with TUBG1; this interaction may participate in centrosome cohesion. Post-translationally, phosphorylation at Ser-848 by GSK3-alpha relieves the inhibition of BIN1 and promotes endocytosis. Phosphorylation at Ser-764 by CDK1 is greatly increased upon mitotic entry. It regulates cytokinesis downstream of calcineurin, and does not affect clathrin-mediated endocytosis. Dephosphorylated by calcineurin/PP2 during cytokinesis in a Ca(2+)- and calmodulin-dependent manner. Phosphorylated on tyrosine residues by EGFR. Phosphorylated on tyrosine residues after activation of SRC. As to expression, expressed in most tissues during embryonic development, including the peripheral nervous system although no expression is evident in skeletal muscle or heart.

The protein localises to the cytoplasm. The protein resides in the cytoskeleton. Its subcellular location is the cytoplasmic vesicle. It is found in the clathrin-coated vesicle. It localises to the cell projection. The protein localises to the uropodium. The protein resides in the endosome. Its subcellular location is the microtubule organizing center. It is found in the centrosome. It localises to the centriole. The protein localises to the recycling endosome. The protein resides in the phagocytic cup. Its subcellular location is the phagosome membrane. It is found in the podosome. It localises to the cell junction. The protein localises to the postsynaptic density. The protein resides in the synapse. Its subcellular location is the synaptosome. It is found in the midbody. It localises to the membrane. The protein localises to the clathrin-coated pit. The enzyme catalyses GTP + H2O = GDP + phosphate + H(+). Catalyzes the hydrolysis of GTP and utilizes this energy to mediate vesicle scission at plasma membrane during endocytosis and filament remodeling at many actin structures during organization of the actin cytoskeleton. Plays an important role in vesicular trafficking processes, namely clathrin-mediated endocytosis (CME), exocytic and clathrin-coated vesicle from the trans-Golgi network, and PDGF stimulated macropinocytosis. During vesicular trafficking process, associates to the membrane, through lipid binding, and self-assembles into ring-like structure through oligomerization to form a helical polymer around the vesicle membrane and leading to vesicle scission. Plays a role in organization of the actin cytoskeleton by mediating arrangement of stress fibers and actin bundles in podocytes. During organization of the actin cytoskeleton, self-assembles into ring-like structure that directly bundles actin filaments to form typical membrane tubules decorated with dynamin spiral polymers. Self-assembly increases GTPase activity and the GTP hydrolysis causes the rapid depolymerization of dynamin spiral polymers, and results in dispersion of actin bundles. Remodels, through its interaction with CTTN, bundled actin filaments in a GTPase-dependent manner and plays a role in orchestrating the global actomyosin cytoskeleton. The interaction with CTTN stabilizes the interaction of DNM2 and actin filaments and stimulates the intrinsic GTPase activity that results in actin filament-barbed ends and increases the sensitivity of filaments in bundles to the actin depolymerizing factor, CFL1. Plays a role in the autophagy process, by participating in the formation of ATG9A vesicles destined for the autophagosomes through its interaction with SNX18, by mediating recycling endosome scission leading to autophagosome release through MAP1LC3B interaction. Also regulates maturation of apoptotic cell corpse-containing phagosomes by recruiting PIK3C3 to the phagosome membrane. Also plays a role in cytokinesis. May participate in centrosome cohesion through its interaction with TUBG1. Plays a role in the regulation of neuron morphology, axon growth and formation of neuronal growth cones. Involved in membrane tubulation. The sequence is that of Dynamin-2 from Mus musculus (Mouse).